The primary structure comprises 380 residues: Queuine tRNA-ribosyltransferase (380 aa).

Asp-96 (proton acceptor) is an active-site residue. Residues 96 to 100 (DSGGF), Asp-150, Gln-193, and Gly-220 contribute to the substrate site. Residues 251–257 (GVGAPDS) form an RNA binding region. Asp-270 (nucleophile) is an active-site residue. The segment at 275–279 (TRIAR) is RNA binding; important for wobble base 34 recognition. Positions 308, 310, 313, and 339 each coordinate Zn(2+).

This sequence belongs to the queuine tRNA-ribosyltransferase family. In terms of assembly, homodimer. Within each dimer, one monomer is responsible for RNA recognition and catalysis, while the other monomer binds to the replacement base PreQ1. Requires Zn(2+) as cofactor.

It carries out the reaction 7-aminomethyl-7-carbaguanine + guanosine(34) in tRNA = 7-aminomethyl-7-carbaguanosine(34) in tRNA + guanine. The protein operates within tRNA modification; tRNA-queuosine biosynthesis. Catalyzes the base-exchange of a guanine (G) residue with the queuine precursor 7-aminomethyl-7-deazaguanine (PreQ1) at position 34 (anticodon wobble position) in tRNAs with GU(N) anticodons (tRNA-Asp, -Asn, -His and -Tyr). Catalysis occurs through a double-displacement mechanism. The nucleophile active site attacks the C1' of nucleotide 34 to detach the guanine base from the RNA, forming a covalent enzyme-RNA intermediate. The proton acceptor active site deprotonates the incoming PreQ1, allowing a nucleophilic attack on the C1' of the ribose to form the product. After dissociation, two additional enzymatic reactions on the tRNA convert PreQ1 to queuine (Q), resulting in the hypermodified nucleoside queuosine (7-(((4,5-cis-dihydroxy-2-cyclopenten-1-yl)amino)methyl)-7-deazaguanosine). In Streptococcus pyogenes serotype M49 (strain NZ131), this protein is Queuine tRNA-ribosyltransferase.